Consider the following 313-residue polypeptide: Porphobilinogen deaminase (313 aa).

Cysteine 242 bears the S-(dipyrrolylmethanemethyl)cysteine mark.

The protein belongs to the HMBS family. Monomer. Dipyrromethane is required as a cofactor.

The enzyme catalyses 4 porphobilinogen + H2O = hydroxymethylbilane + 4 NH4(+). Its pathway is porphyrin-containing compound metabolism; protoporphyrin-IX biosynthesis; coproporphyrinogen-III from 5-aminolevulinate: step 2/4. Its function is as follows. Tetrapolymerization of the monopyrrole PBG into the hydroxymethylbilane pre-uroporphyrinogen in several discrete steps. The sequence is that of Porphobilinogen deaminase from Pseudomonas entomophila (strain L48).